The primary structure comprises 168 residues: Mitochondrial inner membrane protein SHH4 (168 aa).

A mitochondrion-targeting transit peptide spans 1–23 (MSSTKFLKPLCRIRAFHTSIARS). Topologically, residues 24–65 (FTIPFLPKIPQKPGGVSGTANDSSYMPPESRAQGSYHWIVER) are mitochondrial matrix. Residues 66-86 (GLSLAVLPLIAVPLVTTGPIS) form a helical membrane-spanning segment. Topologically, residues 87–92 (TFTDTF) are mitochondrial intermembrane. The chain crosses the membrane as a helical span at residues 93–113 (LSLVLLGHCHIGFQSCIIDYI). Cysteine 101 lines the heme pocket. Tyrosine 112 lines the a ubiquinone pocket. At 114–120 (SERVYGK) the chain is on the mitochondrial matrix side. Residues 121–141 (VHHYAMYLLSLGSFLSFVGIY) form a helical membrane-spanning segment. At 142–168 (KLESQEAGLIASLKSLWDNKPVEKKRQ) the chain is on the mitochondrial intermembrane side.

It belongs to the CybS family. In terms of assembly, interacts with SDH3.

The protein localises to the mitochondrion inner membrane. Its function is as follows. Homolog of SDH4, but seems not to be a stoichiometric subunit of either the succinate dehydrogenase (SDH) complex or the mitochondrial inner membrane translocase TIM22 complex. This is Mitochondrial inner membrane protein SHH4 from Saccharomyces cerevisiae (strain ATCC 204508 / S288c) (Baker's yeast).